We begin with the raw amino-acid sequence, 519 residues long: Laccase-2 (519 aa).

Positions Met-1–Ala-20 are cleaved as a signal peptide. 2 Plastocyanin-like domains span residues Ile-22–Tyr-147 and Val-159–Tyr-301. The N-linked (GlcNAc...) asparagine glycan is linked to Asn-74. Positions 84, 86, 129, and 131 each coordinate Cu cation. 2 cysteine pairs are disulfide-bonded: Cys-105/Cys-508 and Cys-137/Cys-225. 6 N-linked (GlcNAc...) asparagine glycosylation sites follow: Asn-161, Asn-228, Asn-237, Asn-271, Asn-353, and Asn-361. One can recognise a Plastocyanin-like 3 domain in the interval Thr-368–Asp-490. Cu cation-binding residues include His-415, His-418, His-420, His-472, Cys-473, His-474, and His-478.

This sequence belongs to the multicopper oxidase family. Homodimer. The cofactor is Cu cation.

The protein resides in the secreted. It carries out the reaction 4 hydroquinone + O2 = 4 benzosemiquinone + 2 H2O. Its function is as follows. Lignin degradation and detoxification of lignin-derived products. This chain is Laccase-2, found in Trametes villosa (White-rot fungus).